Reading from the N-terminus, the 94-residue chain is Antifungal protein (94 aa).

Positions 1-21 (MKFVSLASLGFALVAALGAVA) are cleaved as a signal peptide. The propeptide occupies 22-43 (TPVEADSLTAGGLDARDESAVL). Intrachain disulfides connect cysteine 50–cysteine 76, cysteine 57–cysteine 83, cysteine 69–cysteine 71, and cysteine 92–cysteine 94.

Belongs to the antifungal protein pafB family.

It is found in the secreted. The protein resides in the host cytoplasm. Functionally, antifungal protein that acts as an inhibitor of growth of a variety of fungal species. In Aspergillus giganteus, this protein is Antifungal protein (afp).